A 1259-amino-acid chain; its full sequence is uncharacterized protein (1259 aa).

Positions 354 to 410 (KLNQAGGKRNSSMNNSTQNNNSSRSNNSARNNNSVWNNNNSAWKNNNSAWNDNSSWK) are disordered. Residues 362-410 (RNSSMNNSTQNNNSSRSNNSARNNNSVWNNNNSAWKNNNSAWNDNSSWK) are compositionally biased toward low complexity.

It is found in the virion. This is an uncharacterized protein from Acanthamoeba polyphaga (Amoeba).